The chain runs to 37 residues: Antifungal protein 4 (37 aa).

It is found in the secreted. Possesses antifungal activity against P.infestans but not F.graminearum. The polypeptide is Antifungal protein 4 (Malva parviflora (Little mallow)).